The primary structure comprises 302 residues: uncharacterized protein (302 aa).

The S4 RNA-binding domain maps to 19-90; the sequence is QWLFSVLKTA…GELDILFEDN (72 aa). The active site involves aspartate 138. The tract at residues 182–205 is disordered; it reads KGTINSPIGRDRSHPTRRRVSPGG.

Belongs to the pseudouridine synthase RluA family.

The catalysed reaction is a uridine in RNA = a pseudouridine in RNA. This is an uncharacterized protein from Bacillus subtilis (strain 168).